Here is a 193-residue protein sequence, read N- to C-terminus: Ion-translocating oxidoreductase complex subunit A (193 aa).

A run of 6 helical transmembrane segments spans residues Ala-5–Leu-25, Leu-39–Leu-59, Trp-62–Ala-82, Ser-102–Leu-122, Val-134–Leu-154, and Ala-172–Ala-192.

The protein belongs to the NqrDE/RnfAE family. As to quaternary structure, the complex is composed of six subunits: RnfA, RnfB, RnfC, RnfD, RnfE and RnfG.

It is found in the cell inner membrane. Functionally, part of a membrane-bound complex that couples electron transfer with translocation of ions across the membrane. This chain is Ion-translocating oxidoreductase complex subunit A, found in Aromatoleum aromaticum (strain DSM 19018 / LMG 30748 / EbN1) (Azoarcus sp. (strain EbN1)).